Reading from the N-terminus, the 74-residue chain is MLFFKEKFYNELSYYRGGHKDLESMFELALEYIEKLEEEDEQQVTDYENAMEEELRDAVDVIESQLEIIKDIVR.

A coiled-coil region spans residues 19–73; it reads HKDLESMFELALEYIEKLEEEDEQQVTDYENAMEEELRDAVDVIESQLEIIKDIV.

Functionally, targets the host DNA sliding clamp and inhibits host DNA replication. This chain is Gene product 168, found in Twortvirus twort (Bacteriophage Twort).